The chain runs to 338 residues: L-serine dehydratase (338 aa).

At Lys39 the chain carries N6-(pyridoxal phosphate)lysine.

It belongs to the serine/threonine dehydratase family. Pyridoxal 5'-phosphate serves as cofactor.

The protein localises to the cytoplasm. It carries out the reaction L-serine = pyruvate + NH4(+). It functions in the pathway carbohydrate biosynthesis; gluconeogenesis. This Saccharomyces cerevisiae (strain YJM789) (Baker's yeast) protein is L-serine dehydratase (SDL1).